The primary structure comprises 420 residues: UDP-N-acetylglucosamine 1-carboxyvinyltransferase (420 aa).

Position 22–23 (22–23) interacts with phosphoenolpyruvate; it reads KN. Arginine 93 is a UDP-N-acetyl-alpha-D-glucosamine binding site. Catalysis depends on cysteine 117, which acts as the Proton donor. Cysteine 117 carries the 2-(S-cysteinyl)pyruvic acid O-phosphothioketal modification. Positions 307 and 329 each coordinate UDP-N-acetyl-alpha-D-glucosamine.

It belongs to the EPSP synthase family. MurA subfamily.

It localises to the cytoplasm. The catalysed reaction is phosphoenolpyruvate + UDP-N-acetyl-alpha-D-glucosamine = UDP-N-acetyl-3-O-(1-carboxyvinyl)-alpha-D-glucosamine + phosphate. Its pathway is cell wall biogenesis; peptidoglycan biosynthesis. Functionally, cell wall formation. Adds enolpyruvyl to UDP-N-acetylglucosamine. The polypeptide is UDP-N-acetylglucosamine 1-carboxyvinyltransferase (Saccharophagus degradans (strain 2-40 / ATCC 43961 / DSM 17024)).